The primary structure comprises 77 residues: Teretoxin Tsu15.4 (77 aa).

Residues 1-21 (MTKLTVLLLAILVLLPLATSN) form the signal peptide. The propeptide occupies 22–40 (SAADEALASLSGLLRRAKR).

Contains 4 disulfide bonds. Expressed by the venom duct.

Its subcellular location is the secreted. The protein is Teretoxin Tsu15.4 of Terebra subulata (Chocolate spotted auger).